The primary structure comprises 754 residues: 1,4-alpha-glucan branching enzyme GlgB (754 aa).

Aspartate 431 (nucleophile) is an active-site residue. The Proton donor role is filled by glutamate 484.

This sequence belongs to the glycosyl hydrolase 13 family. GlgB subfamily. As to quaternary structure, monomer.

The enzyme catalyses Transfers a segment of a (1-&gt;4)-alpha-D-glucan chain to a primary hydroxy group in a similar glucan chain.. The protein operates within glycan biosynthesis; glycogen biosynthesis. Functionally, catalyzes the formation of the alpha-1,6-glucosidic linkages in glycogen by scission of a 1,4-alpha-linked oligosaccharide from growing alpha-1,4-glucan chains and the subsequent attachment of the oligosaccharide to the alpha-1,6 position. In Prochlorococcus marinus (strain MIT 9215), this protein is 1,4-alpha-glucan branching enzyme GlgB.